The sequence spans 204 residues: Proteasome subunit beta 1 (204 aa).

A propeptide spans methionine 1 to alanine 9 (removed in mature form; by autocatalysis). Threonine 10 functions as the Nucleophile in the catalytic mechanism.

Belongs to the peptidase T1B family. In terms of assembly, the 20S proteasome core is composed of 14 alpha and 14 beta subunits that assemble into four stacked heptameric rings, resulting in a barrel-shaped structure. The two inner rings, each composed of seven catalytic beta subunits, are sandwiched by two outer rings, each composed of seven alpha subunits. The catalytic chamber with the active sites is on the inside of the barrel. Has a gated structure, the ends of the cylinder being occluded by the N-termini of the alpha-subunits. Is capped at one or both ends by the proteasome regulatory ATPase, PAN.

It localises to the cytoplasm. It catalyses the reaction Cleavage of peptide bonds with very broad specificity.. Its activity is regulated as follows. The formation of the proteasomal ATPase PAN-20S proteasome complex, via the docking of the C-termini of PAN into the intersubunit pockets in the alpha-rings, triggers opening of the gate for substrate entry. Interconversion between the open-gate and close-gate conformations leads to a dynamic regulation of the 20S proteasome proteolysis activity. Its function is as follows. Component of the proteasome core, a large protease complex with broad specificity involved in protein degradation. The protein is Proteasome subunit beta 1 of Hyperthermus butylicus (strain DSM 5456 / JCM 9403 / PLM1-5).